Consider the following 736-residue polypeptide: Na(+)/H(+) antiporter NhaA (736 aa).

The segment at 1-387 is na(+)/H(+) antiporter NhaA; that stretch reads MNHSPQSARP…ICGYLLLRAA (387 aa). A run of 12 helical transmembrane segments spans residues 23-43, 58-78, 96-116, 126-146, 155-175, 178-198, 201-221, 224-244, 265-285, 298-318, 334-354, and 367-387; these read AGGI…NSPF, LSLA…LVGL, MLPG…FAVL, GWAV…SLLG, VFLA…IAIF, AEIS…LFVM, MGVV…FFVF, GVHA…KPAP, VAFI…FKGL, ILLG…WLAI, LYGV…IGLL, and IGVL…LRAA. The segment at 388–736 is peptidase S49; sequence RPDQSAANPL…EKAIWARYGL (349 aa).

The protein in the N-terminal section; belongs to the NhaA Na(+)/H(+) (TC 2.A.33) antiporter family. This sequence in the C-terminal section; belongs to the peptidase S49 family.

The protein localises to the cell inner membrane. It carries out the reaction Na(+)(in) + 2 H(+)(out) = Na(+)(out) + 2 H(+)(in). Na(+)/H(+) antiporter that extrudes sodium in exchange for external protons. The polypeptide is Na(+)/H(+) antiporter NhaA (Brucella abortus (strain 2308)).